Consider the following 408-residue polypeptide: MIIMDTIFVGSAIPDITNRPQLYEWLERNMERSYKDILDDTKLEPEQNVVKTYILESNIHPKKLSRIIKTGKIKPLDEYEFYMLRIGDEGYFFIDAKNPRFWKLYTLQKSEESDKYFNKLISPIKSRLDNLWMPTGDLEKFLKKADYVRGLSTKHDETPFYLDNDVEERANKLSISSNGESVYELIKIIQSLSSDEIQEFEKLIKDFQLLNDTKIKKIFNTIKKLHEFKHLMRITKSKIKIVSEDDKDKFVLEDIYYWGKFTVKGTSIEKHNEIVDKTIENYEQKIEIIEDSLIDYTSSDWGDRIPLIYEFEKEIEDLKNFVEGLISVKEPFKIWGLAKQVEEDMYYISGVDLHNGDRFSLEVTPWWMRLYLPKGSCGNTALRLLSNIQQTYDSETILEVEKYGERIR.

This is an uncharacterized protein from Methanocaldococcus jannaschii (strain ATCC 43067 / DSM 2661 / JAL-1 / JCM 10045 / NBRC 100440) (Methanococcus jannaschii).